The primary structure comprises 449 residues: tRNA(Ile)-lysidine synthase (449 aa).

35–40 provides a ligand contact to ATP; the sequence is SGGIDS.

It belongs to the tRNA(Ile)-lysidine synthase family.

Its subcellular location is the cytoplasm. The catalysed reaction is cytidine(34) in tRNA(Ile2) + L-lysine + ATP = lysidine(34) in tRNA(Ile2) + AMP + diphosphate + H(+). In terms of biological role, ligates lysine onto the cytidine present at position 34 of the AUA codon-specific tRNA(Ile) that contains the anticodon CAU, in an ATP-dependent manner. Cytidine is converted to lysidine, thus changing the amino acid specificity of the tRNA from methionine to isoleucine. This chain is tRNA(Ile)-lysidine synthase, found in Coxiella burnetii (strain RSA 493 / Nine Mile phase I).